We begin with the raw amino-acid sequence, 475 residues long: Flavin-dependent monooxygenase (475 aa).

Belongs to the aromatic-ring hydroxylase family. Requires FAD as cofactor.

The protein localises to the cytoplasm. The catalysed reaction is a tetracycline + NADPH + O2 + H(+) = an 11a-hydroxytetracycline + NADP(+) + H2O. It catalyses the reaction tetracycline + NADPH + O2 + H(+) = 11a-hydroxytetracycline + NADP(+) + H2O. Inhibited by anhydrotetracycline. An FAD-requiring monooxygenase active on some tetracycline antibiotic derivatives, which leads to their inactivation. Hydroxylates carbon 11a of tetracycline and some analogs. Confers resistance to tetracycline and doxycycline via an oxidoreductase activity; probably monooxygenates the antibiotics. Does not act on tigecycline. This chain is Flavin-dependent monooxygenase, found in Mycobacteroides abscessus (strain ATCC 19977 / DSM 44196 / CCUG 20993 / CIP 104536 / JCM 13569 / NCTC 13031 / TMC 1543 / L948) (Mycobacterium abscessus).